The chain runs to 38 residues: Toxin Lqh 8/6 (38 aa).

Disulfide bonds link cysteine 2–cysteine 19, cysteine 5–cysteine 28, cysteine 16–cysteine 33, and cysteine 20–cysteine 35.

In terms of tissue distribution, expressed by the venom gland.

Its subcellular location is the secreted. Its function is as follows. Toxin with unknown function in healthy organisms. On glioma cells, interacts with chloride channels (probably ClC-3/CLCN3) and MMP2 at the surface of glioma cells. This complex is then internalized via caveolae, thus inhibiting the chloride channels necessary for cell shrinkage and tumor propagation. This Leiurus hebraeus (Hebrew deathstalker scorpion) protein is Toxin Lqh 8/6.